Consider the following 582-residue polypeptide: Phosphoglucomutase, cytoplasmic (582 aa).

2 residues coordinate alpha-D-glucose 1,6-bisphosphate: Arg-25 and Ser-124. Ser-124 functions as the Phosphoserine intermediate in the catalytic mechanism. Positions 124, 300, 302, and 304 each coordinate Mg(2+). At Ser-124 the chain carries Phosphoserine. Alpha-D-glucose 1,6-bisphosphate contacts are provided by Asp-304, Arg-305, Thr-368, Glu-387, Ser-389, and Lys-400.

The protein belongs to the phosphohexose mutase family. Monomer. The cofactor is Mg(2+).

Its subcellular location is the cytoplasm. The catalysed reaction is alpha-D-glucose 1-phosphate = alpha-D-glucose 6-phosphate. It carries out the reaction O-phospho-L-seryl-[protein] + alpha-D-glucose 1-phosphate = alpha-D-glucose 1,6-bisphosphate + L-seryl-[protein]. The enzyme catalyses alpha-D-glucose 1,6-bisphosphate + L-seryl-[protein] = O-phospho-L-seryl-[protein] + alpha-D-glucose 6-phosphate. Functionally, catalyzes the reversible isomerization of alpha-D-glucose 1-phosphate to alpha-D-glucose 6-phosphate. The mechanism proceeds via the intermediate compound alpha-D-glucose 1,6-bisphosphate. This enzyme participates in both the breakdown and synthesis of glucose. In Pisum sativum (Garden pea), this protein is Phosphoglucomutase, cytoplasmic (PGM1).